A 216-amino-acid polypeptide reads, in one-letter code: MRDQFICLALLLCALHSACGLYFHISETERKCFIEEVPDETTVIVNYKVELYDPRSNGFMPSSPGIGMHVEVRDSDDKIILSRVYSSQGRISFTSHTPGEHVICMYSNSTAWFSGAQLRVHLDIQVGEHAIDYANVAQKEKLTELQLRIRQLLDQVEQITKEQNYQRYREERFRHTSESTNSRVLWWSLAQTLVLVCMGFWQMRHLKSFFEAKKLV.

An N-terminal signal peptide occupies residues methionine 1–glycine 20. Residues leucine 21–serine 182 are Lumenal-facing. The GOLD domain maps to arginine 30–valine 126. Positions alanine 134–asparagine 164 form a coiled coil. Residues arginine 183–methionine 203 form a helical membrane-spanning segment. The Cytoplasmic segment spans residues arginine 204–valine 216. Residues lysine 213–valine 216 carry the Prevents secretion from ER motif.

This sequence belongs to the EMP24/GP25L family.

Its subcellular location is the endoplasmic reticulum membrane. Eca and bai are essential, though not redundant, for dorsoventral patterning of the embryo. Specifically required during early embryogenesis for the activity of maternal tkv, while the zygotic tkv is not affected. Involved in Golgi organization. The polypeptide is Transmembrane emp24 domain-containing protein eca (Drosophila pseudoobscura pseudoobscura (Fruit fly)).